Here is a 239-residue protein sequence, read N- to C-terminus: ATP-dependent dethiobiotin synthetase BioD (239 aa).

15–20 (EIGKTF) is an ATP binding site. Thr-19 is a binding site for Mg(2+). Lys-40 is a catalytic residue. ATP is bound by residues Asp-57, 118-121 (EGVG), 178-179 (NH), and 211-213 (AHL). Positions 57 and 118 each coordinate Mg(2+).

The protein belongs to the dethiobiotin synthetase family. As to quaternary structure, homodimer. Mg(2+) is required as a cofactor.

The protein localises to the cytoplasm. It catalyses the reaction (7R,8S)-7,8-diammoniononanoate + CO2 + ATP = (4R,5S)-dethiobiotin + ADP + phosphate + 3 H(+). It participates in cofactor biosynthesis; biotin biosynthesis; biotin from 7,8-diaminononanoate: step 1/2. In terms of biological role, catalyzes a mechanistically unusual reaction, the ATP-dependent insertion of CO2 between the N7 and N8 nitrogen atoms of 7,8-diaminopelargonic acid (DAPA, also called 7,8-diammoniononanoate) to form a ureido ring. The sequence is that of ATP-dependent dethiobiotin synthetase BioD from Burkholderia ambifaria (strain MC40-6).